A 239-amino-acid polypeptide reads, in one-letter code: ATP synthase subunit a (239 aa).

A run of 5 helical transmembrane segments spans residues 13 to 33, 75 to 95, 113 to 133, 174 to 194, and 208 to 230; these read IWFDGTIVLMVLLTCIIVFAF, FHLMAFTLFMFVLVSNILGLV, DPIVTLTLAMMMIVLTHFFGM, GNIFAGEVLLGLIAGTVASVG, and WVAFSIFIGCIQAFIFVTLSMVY.

Belongs to the ATPase A chain family. In terms of assembly, F-type ATPases have 2 components, CF(1) - the catalytic core - and CF(0) - the membrane proton channel. CF(1) has five subunits: alpha(3), beta(3), gamma(1), delta(1), epsilon(1). CF(0) has three main subunits: a(1), b(2) and c(9-12). The alpha and beta chains form an alternating ring which encloses part of the gamma chain. CF(1) is attached to CF(0) by a central stalk formed by the gamma and epsilon chains, while a peripheral stalk is formed by the delta and b chains.

Its subcellular location is the cell membrane. Its function is as follows. Key component of the proton channel; it plays a direct role in the translocation of protons across the membrane. The chain is ATP synthase subunit a from Enterococcus faecalis (strain ATCC 700802 / V583).